The following is a 364-amino-acid chain: tRNA(Met) cytidine acetate ligase (364 aa).

ATP contacts are provided by residues 7–20 (IAEF…HKYL), glycine 96, asparagine 152, and arginine 175.

The protein belongs to the TmcAL family.

It localises to the cytoplasm. The catalysed reaction is cytidine(34) in elongator tRNA(Met) + acetate + ATP = N(4)-acetylcytidine(34) in elongator tRNA(Met) + AMP + diphosphate. Its function is as follows. Catalyzes the formation of N(4)-acetylcytidine (ac(4)C) at the wobble position of elongator tRNA(Met), using acetate and ATP as substrates. First activates an acetate ion to form acetyladenylate (Ac-AMP) and then transfers the acetyl group to tRNA to form ac(4)C34. In Streptococcus sanguinis (strain SK36), this protein is tRNA(Met) cytidine acetate ligase.